The following is a 126-amino-acid chain: Fluoride-specific ion channel FluC (126 aa).

4 consecutive transmembrane segments (helical) span residues 6-26 (FLAV…LAIL), 36-56 (YGTL…VGFF), 69-89 (LVIT…GEVV), and 99-119 (IGVL…MLGF). Positions 76 and 79 each coordinate Na(+).

The protein belongs to the fluoride channel Fluc/FEX (TC 1.A.43) family.

It localises to the cell inner membrane. The catalysed reaction is fluoride(in) = fluoride(out). Na(+) is not transported, but it plays an essential structural role and its presence is essential for fluoride channel function. Functionally, fluoride-specific ion channel. Important for reducing fluoride concentration in the cell, thus reducing its toxicity. This Ralstonia pickettii (strain 12J) protein is Fluoride-specific ion channel FluC.